The sequence spans 703 residues: Polyribonucleotide nucleotidyltransferase (703 aa).

Mg(2+) contacts are provided by aspartate 484 and aspartate 490. The KH domain maps to 551–610; that stretch reads PQMIRMQIDPDKIREVIGPGGKTIHKIVDETGCKIDIEDDGSLFIMATDEEAAKKARFFV. The S1 motif domain maps to 620–694; the sequence is GKTYMGTVKR…RQGRVNLSRK (75 aa).

This sequence belongs to the polyribonucleotide nucleotidyltransferase family. The cofactor is Mg(2+).

It is found in the cytoplasm. The enzyme catalyses RNA(n+1) + phosphate = RNA(n) + a ribonucleoside 5'-diphosphate. Its function is as follows. Involved in mRNA degradation. Catalyzes the phosphorolysis of single-stranded polyribonucleotides processively in the 3'- to 5'-direction. The protein is Polyribonucleotide nucleotidyltransferase of Syntrophomonas wolfei subsp. wolfei (strain DSM 2245B / Goettingen).